A 353-amino-acid chain; its full sequence is Inactive ubiquitin thioesterase OTULINL (353 aa).

Residues 1–80 are required for membrane binding; the sequence is MKATRSAPRE…KWWIGYLQRK (80 aa). Residues 125 to 353 enclose the OTU domain; that stretch reads KCVRPVKRDN…NDHQYHIPVF (229 aa).

It belongs to the peptidase C65 family. Otulin subfamily. As to quaternary structure, does not bind ubiquitin or ubiquitin-like proteins.

The protein resides in the cytoplasm. Its subcellular location is the endoplasmic reticulum membrane. It localises to the nucleus envelope. Functionally, lacks deubiquitinase activity. This is Inactive ubiquitin thioesterase OTULINL from Rattus norvegicus (Rat).